Consider the following 404-residue polypeptide: Acetylornithine aminotransferase (404 aa).

Residues 113 to 114 (GT) and F139 each bind pyridoxal 5'-phosphate. Residue R142 coordinates N(2)-acetyl-L-ornithine. Residue 224 to 227 (DEVQ) coordinates pyridoxal 5'-phosphate. At K253 the chain carries N6-(pyridoxal phosphate)lysine. S281 lines the N(2)-acetyl-L-ornithine pocket. T282 lines the pyridoxal 5'-phosphate pocket.

This sequence belongs to the class-III pyridoxal-phosphate-dependent aminotransferase family. ArgD subfamily. As to quaternary structure, homodimer. Pyridoxal 5'-phosphate is required as a cofactor.

It is found in the cytoplasm. It catalyses the reaction N(2)-acetyl-L-ornithine + 2-oxoglutarate = N-acetyl-L-glutamate 5-semialdehyde + L-glutamate. It participates in amino-acid biosynthesis; L-arginine biosynthesis; N(2)-acetyl-L-ornithine from L-glutamate: step 4/4. The sequence is that of Acetylornithine aminotransferase from Mycobacterium leprae (strain TN).